A 70-amino-acid chain; its full sequence is ATP synthase subunit c (70 aa).

The next 2 membrane-spanning stretches (helical) occupy residues 1–21 (MNFL…SYGN) and 47–67 (FIGV…SFLI).

This sequence belongs to the ATPase C chain family. F-type ATPases have 2 components, F(1) - the catalytic core - and F(0) - the membrane proton channel. F(1) has five subunits: alpha(3), beta(3), gamma(1), delta(1), epsilon(1). F(0) has three main subunits: a(1), b(2) and c(10-14). The alpha and beta chains form an alternating ring which encloses part of the gamma chain. F(1) is attached to F(0) by a central stalk formed by the gamma and epsilon chains, while a peripheral stalk is formed by the delta and b chains.

The protein localises to the cell membrane. Its function is as follows. F(1)F(0) ATP synthase produces ATP from ADP in the presence of a proton or sodium gradient. F-type ATPases consist of two structural domains, F(1) containing the extramembraneous catalytic core and F(0) containing the membrane proton channel, linked together by a central stalk and a peripheral stalk. During catalysis, ATP synthesis in the catalytic domain of F(1) is coupled via a rotary mechanism of the central stalk subunits to proton translocation. In terms of biological role, key component of the F(0) channel; it plays a direct role in translocation across the membrane. A homomeric c-ring of between 10-14 subunits forms the central stalk rotor element with the F(1) delta and epsilon subunits. This is ATP synthase subunit c from Latilactobacillus sakei subsp. sakei (strain 23K) (Lactobacillus sakei subsp. sakei).